The following is a 348-amino-acid chain: Fructose-1,6-bisphosphatase class 1 (348 aa).

4 residues coordinate Mg(2+): Glu92, Asp111, Leu113, and Asp114. Substrate contacts are provided by residues 114–117 (DGSS) and Asn204. Residue Glu276 coordinates Mg(2+).

The protein belongs to the FBPase class 1 family. As to quaternary structure, homotetramer. The cofactor is Mg(2+).

It localises to the cytoplasm. The catalysed reaction is beta-D-fructose 1,6-bisphosphate + H2O = beta-D-fructose 6-phosphate + phosphate. Its pathway is carbohydrate biosynthesis; gluconeogenesis. The sequence is that of Fructose-1,6-bisphosphatase class 1 from Methylorubrum populi (strain ATCC BAA-705 / NCIMB 13946 / BJ001) (Methylobacterium populi).